The chain runs to 177 residues: Bifunctional protein PyrR (177 aa).

A PRPP-binding motif is present at residues 99–111; that stretch reads LVLIDDVIYKGRT.

This sequence belongs to the purine/pyrimidine phosphoribosyltransferase family. PyrR subfamily.

It carries out the reaction UMP + diphosphate = 5-phospho-alpha-D-ribose 1-diphosphate + uracil. Regulates the transcription of the pyrimidine nucleotide (pyr) operon in response to exogenous pyrimidines. Its function is as follows. Also displays a weak uracil phosphoribosyltransferase activity which is not physiologically significant. The protein is Bifunctional protein PyrR of Picosynechococcus sp. (strain ATCC 27264 / PCC 7002 / PR-6) (Agmenellum quadruplicatum).